The sequence spans 267 residues: tRNA pseudouridine synthase A (267 aa).

The active-site Nucleophile is D51. Y109 contacts substrate.

It belongs to the tRNA pseudouridine synthase TruA family. In terms of assembly, homodimer.

The enzyme catalyses uridine(38/39/40) in tRNA = pseudouridine(38/39/40) in tRNA. Its function is as follows. Formation of pseudouridine at positions 38, 39 and 40 in the anticodon stem and loop of transfer RNAs. This is tRNA pseudouridine synthase A from Staphylococcus carnosus (strain TM300).